We begin with the raw amino-acid sequence, 156 residues long: Snaclec stejaggregin-B subunit alpha (156 aa).

The N-terminal stretch at 1-23 is a signal peptide; that stretch reads MGRFISVSFGLLVVFLSLSGTGA. 3 cysteine pairs are disulfide-bonded: C25–C36, C53–C150, and C125–C142. One can recognise a C-type lectin domain in the interval 32–151; that stretch reads FKQYCYQIIK…CEQKHLFMCK (120 aa).

This sequence belongs to the snaclec family. Heteromultimer; disulfide-linked. As to expression, expressed by the venom gland.

It is found in the secreted. In terms of biological role, interferes with one step of hemostasis (modulation of platelet aggregation, or coagulation cascade, for example). This is Snaclec stejaggregin-B subunit alpha from Trimeresurus stejnegeri (Chinese green tree viper).